The sequence spans 152 residues: Deoxyuridine 5'-triphosphate nucleotidohydrolase (152 aa).

Residues R72 to G74, N85, and T89 to D91 each bind substrate.

The protein belongs to the dUTPase family. The cofactor is Mg(2+).

The enzyme catalyses dUTP + H2O = dUMP + diphosphate + H(+). It participates in pyrimidine metabolism; dUMP biosynthesis; dUMP from dCTP (dUTP route): step 2/2. Its function is as follows. This enzyme is involved in nucleotide metabolism: it produces dUMP, the immediate precursor of thymidine nucleotides and it decreases the intracellular concentration of dUTP so that uracil cannot be incorporated into DNA. In Rhodopseudomonas palustris (strain ATCC BAA-98 / CGA009), this protein is Deoxyuridine 5'-triphosphate nucleotidohydrolase.